The following is a 569-amino-acid chain: Hemin/hemoglobin-binding protein 2 (569 aa).

The N-terminal stretch at 1–28 (MKKLWKKGLVAFLALTLIFQLIPGFASA) is a signal peptide. NEAT domains follow at residues 34-173 (KDGG…FKVI), 184-307 (LSDG…ATAA), and 360-484 (LNNH…IKDI). Heme-binding positions include 204-205 (SS), tyrosine 280, and tyrosine 289. Positions 307 to 357 (ASSYPGSDETPPVVNPGETNPPVTKPDPGTTNPPVTTPPTTPSKPAVVDPK) are disordered. A compositionally biased stretch (polar residues) spans 502–511 (TGNVASNNNA). Positions 502–537 (TGNVASNNNAGPKLAKPDFDDTNSVQKTASKTEKNA) are disordered. Residues 536–540 (NAKTN) carry the NXZTN sorting signal motif. Threonine 539 is subject to Pentaglycyl murein peptidoglycan amidated threonine. Positions 540–569 (NDSSSMVWYITLFGASFLYLAYRLKRKRLS) are cleaved as a propeptide — removed by sortase B.

It is found in the cell surface. It localises to the secreted. The protein localises to the cell wall. Its activity is regulated as follows. Is overexpressed in mecA, clpC and clpP mutants, suggesting the protein level is controlled by MecA, ClpC and ClpP (at protein level). Functionally, acts as an extracellular and cell wall-bound hemophore; scavenges host heme and hemoglobin from the environment and also serves as a cell wall receptor for both. At low hemin (Hn) and hemoglobin (Hb) concentrations adsorbs Hn/Hb and presumably directs it to membrane transporters. Soluble Hbp2 can probably pass Hn/Hb to cell wall-anchored Hbp2, and both forms can accept Hn/Hb from Hbp1. May be involved in crossing the digestive barrier in infected animals. Binds host hemin. Binds host hemoglobin with affinity in the nanomolar range. This Listeria monocytogenes serovar 1/2a (strain ATCC BAA-679 / EGD-e) protein is Hemin/hemoglobin-binding protein 2.